The sequence spans 407 residues: Actinorhodin polyketide putative beta-ketoacyl synthase 2 (407 aa).

One can recognise a Ketosynthase family 3 (KS3) domain in the interval 1 to 402; it reads MSVLITGVGV…GFNSAAVLRR (402 aa).

This sequence belongs to the thiolase-like superfamily. Beta-ketoacyl-ACP synthases family.

In Streptomyces coelicolor (strain ATCC BAA-471 / A3(2) / M145), this protein is Actinorhodin polyketide putative beta-ketoacyl synthase 2.